The primary structure comprises 247 residues: OCIA domain-containing protein 1 (247 aa).

One can recognise an OCIA domain in the interval 1–112 (MNGRADFREP…KKLENSPLGE (112 aa)). Residues S108 and S116 each carry the phosphoserine modification. The tract at residues 116-247 (SGELRRSLPP…VNKYGDTWDE (132 aa)) is disordered. 2 stretches are compositionally biased toward polar residues: residues 136–146 (SNVSGQSSFGT) and 168–177 (ASMNESTPTG). 2 stretches are compositionally biased toward basic and acidic residues: residues 192–210 (DSPKRKSVTYEELRNKNRE) and 218–240 (HKTDPSVRPMQERGPQKEVKVNK). Phosphoserine occurs at positions 193 and 198.

Belongs to the OCIAD1 family. As to quaternary structure, interacts with OCIAD2. Interacts with STAT3.

The protein localises to the endosome. Maintains stem cell potency. Increases STAT3 phosphorylation and controls ERK phosphorylation. May act as a scaffold, increasing STAT3 recruitment onto endosomes. The sequence is that of OCIA domain-containing protein 1 from Rattus norvegicus (Rat).